The chain runs to 254 residues: DNA repair protein RecO (254 aa).

The protein belongs to the RecO family.

Functionally, involved in DNA repair and RecF pathway recombination. This Anaeromyxobacter dehalogenans (strain 2CP-1 / ATCC BAA-258) protein is DNA repair protein RecO.